The following is a 710-amino-acid chain: mRNA export factor crp79 (710 aa).

2 consecutive RRM domains span residues 19–102 and 222–292; these read IYVG…KLTI and HFKQ…PTTP. Over residues 333–348 the composition is skewed to polar residues; it reads QWGSVSTTGVSNQQNH. Positions 333-357 are disordered; that stretch reads QWGSVSTTGVSNQQNHPAAWNPDNK. An RRM 3 domain is found at 401-474; that stretch reads EDLFSPFGSI…DRIRRLQAFF (74 aa). A compositionally biased stretch (polar residues) spans 502-524; the sequence is TIRKPIESSTNKISENPTTLSSK. The segment at 502–544 is disordered; the sequence is TIRKPIESSTNKISENPTTLSSKVENKNEPKTGENKEPSQTNE. The segment covering 525 to 538 has biased composition (basic and acidic residues); the sequence is VENKNEPKTGENKE.

It is found in the cytoplasm. The protein resides in the nucleus. Its function is as follows. Binds the poly(A) tail of mRNA. Involved in the export of mRNA from the nucleus to the cytoplasm. The polypeptide is mRNA export factor crp79 (crp79) (Schizosaccharomyces pombe (strain 972 / ATCC 24843) (Fission yeast)).